A 154-amino-acid polypeptide reads, in one-letter code: Probable ubiquitin-conjugating enzyme E2 31 (154 aa).

A UBC core domain is found at 8-153 (KAAQRIAMEY…AREFTARHAN (146 aa)). Residue cysteine 91 is the Glycyl thioester intermediate of the active site.

The protein belongs to the ubiquitin-conjugating enzyme family.

It catalyses the reaction S-ubiquitinyl-[E1 ubiquitin-activating enzyme]-L-cysteine + [E2 ubiquitin-conjugating enzyme]-L-cysteine = [E1 ubiquitin-activating enzyme]-L-cysteine + S-ubiquitinyl-[E2 ubiquitin-conjugating enzyme]-L-cysteine.. It participates in protein modification; protein ubiquitination. Its function is as follows. Accepts the ubiquitin from the E1 complex and catalyzes its covalent attachment to other proteins. This Arabidopsis thaliana (Mouse-ear cress) protein is Probable ubiquitin-conjugating enzyme E2 31 (UBC31).